Reading from the N-terminus, the 195-residue chain is Thymidylate kinase (195 aa).

Residue 7-14 (GIDGVGKS) participates in ATP binding.

It belongs to the thymidylate kinase family.

The enzyme catalyses dTMP + ATP = dTDP + ADP. In terms of biological role, phosphorylation of dTMP to form dTDP in both de novo and salvage pathways of dTTP synthesis. This is Thymidylate kinase from Campylobacter hominis (strain ATCC BAA-381 / DSM 21671 / CCUG 45161 / LMG 19568 / NCTC 13146 / CH001A).